The sequence spans 1866 residues: MDDILSAALAESGLDFLCQQSSPTPSTSGSIHDDAGQSFSNNTHTPSVSQFFDETSNDSHSSSAYYTPMATPFVSTEDGGVPTSFFGMDEEDGGCTIMTTAGTSGSNNIDGIEDAGGGMYYPHVKVIPRKHTAPTVNQSEPSTPTVTIVPKKEDPLFETNTADSPTPSGDTSTTASYEGNDGLEDQETTSDRQNPMFVQTARSTDGRLDTPSTSATVSPHITSSLTQRSHTSSPASSASEGTVVPPRKKGLPITTGSIVKRTVQTKDGLQTQYLKAFVNENGEKIYKLLSPVAASAVARGTLPPGMGRGGSTIGRGGTMVNKNGERLMVVKNHVGPNGQMLVKRMVSPAGTRIVANGGQGRGQPIYRAVDGSNGPTHLLRRTTTTGQPTRGAPVGMAARHAVRGGTVYGGGNGYRVNLVGRGTGGSTMVHHQPLNRISSQRSVAPVGRVLNRGALRNGAQQPLHVSTSSPAFHYMEEQPSPTTNGMVIQAKTPGAGVIQARHMQSQQSFPSGGPARVLMNRSSTNAGLSRMVGGGYDQQLPTAPNGRLMIPSTAVRVPGSGMASPRLQTTPQPLTKSQKAKDEMKMAYQVGREEALQQRRNDLEDDEENLGYAETYSEYTPAKLRSGMAHPDSVVESASLSSVSPPDVKYQISIPEYLIDMGHISALQLEAVIYACQMHERRMPSGERYGYLIGDGAGVGKGRTVACIIFENYLQGRKRAIWLSVSSDLKFDAERDLRDCGAPNIPVYALNKMKYAKISGKENGSIKKGVMFATYTSLIGECRGAKSRKYRSRISQLIQWFGQDYDGVIILDECHRAKNLVPTAGAKPTKTGRMVLELQKALPNARVVYASATGATEPRNMAYMTRLGLWGERQAFPEFHDFISAVERRGVGAMEIVAMDMKQRGLYLARQLSFRGVSFAVQEVQLSSEFVKMYDAAVKLWMEARRQFQTVIETMDEEERSTCKTVWGQFWACHQRFFKYLCIAAKVDTCVQLSREAIKAKKCVVIGLQSTGESATLETLEEMGGELNEFVSTAKTVLYGLIDKHFPTDASFSMGDRDIFKDFDDFERPAKRRKTRETLSFLGDVGFDTWTGVTTGMGGRVGDGVTKNITRGLSGIGRSSMSSSTGNTNNEDANSTTSESSDGSDDEVENDMISENGGESGDLESAREEAEGARTLEDGEQDEWVKALLAEAESSSDDSDEEVVKDEDEDEEAESKSGETHEQEEEFNPFMCDFTNDDPWAHNQQIVEDTPQKDRKAKKRKRDEEEAERLREKVRKREERREKKRRRAIRRAEREKQRRNEELQARGSATDFITSSRICGNGSGEQDDINPMLIKTELLAAVERLAPSLPANTLDQLIDEMGGPEYVAEMTGRRGHMVTSETGDVMYQRRNANAEVSLELINMEEKEKFMRGEKLIAIISEAASSGISLQSDRRAINKRRRVHITLELPWSADKAIQQFGRTHRSNQVSGPEYVFLISELAGEKRFASIVAKRLESLGALTHGDRRATETRDLSQFNMDNKYGRVALDTLLKTVIGQAGTPLIDPPKDYKAGEFFEDMRLYMEGVGLLAKNKTGQYTIEKEAATIPKFLNRILGLPVHAQNSLFHYFSEIVAELIAQSKHDGTYDTGIMDLGTGDDQVRKLETRVFTGRVDNGSFRVEIHKIGVERGVSWEEAMELHKEHSNDDDGFYICHPGGANTANTKKVAALVYGIGKIRMDNGARLYAITRPSTGRSPKLMTMADLSKRFHKVSIDEAKEVWKQQYDSAANMCQHNYVYGKCRTESNGTYCEVGRRTRTYFVLSGSVLSVWPIVEEVLAGSDRKSSRMQVIRVRTEQDQKIVGLLVLPTHVRHLVQQLETHCGRSYVKTEP.

Residues 19-28 (QQSSPTPSTS) show a composition bias toward low complexity. 5 disordered regions span residues 19-63 (QQSS…HSSS), 132-151 (TAPTVNQSEPSTPTVTIVPK), 156-253 (LFET…GLPI), 561-581 (GMASPRLQTTPQPLTKSQKAK), and 1112-1308 (GLSG…ARGS). Composition is skewed to polar residues over residues 37–63 (QSFSNNTHTPSVSQFFDETSNDSHSSS) and 134–146 (PTVNQSEPSTPTV). Low complexity predominate over residues 161 to 176 (TADSPTPSGDTSTTAS). 2 stretches are compositionally biased toward polar residues: residues 191 to 203 (DRQNPMFVQTARS) and 210 to 228 (TPSTSATVSPHITSSLTQR). Residues 229-239 (SHTSSPASSAS) show a composition bias toward low complexity. Over residues 566–577 (RLQTTPQPLTKS) the composition is skewed to polar residues. Low complexity predominate over residues 1112–1126 (GLSGIGRSSMSSSTG). A compositionally biased stretch (acidic residues) spans 1142-1152 (DGSDDEVENDM). Residues 1164 to 1177 (ESAREEAEGARTLE) show a composition bias toward basic and acidic residues. The span at 1194–1213 (SSSDDSDEEVVKDEDEDEEA) shows a compositional bias: acidic residues. Composition is skewed to basic and acidic residues over residues 1262–1281 (RDEEEAERLREKVRKREERR) and 1290–1304 (RRAEREKQRRNEELQ).

This sequence belongs to the SBNO family. As to expression, expressed in the somatic gonad, neurons, hypodermal cells, seam cells, the excretory system, and intestinal cells (at protein level).

It localises to the nucleus. Functionally, transcriptional activator that functions upstream of the let-60/Ras and let-23/EGFR signaling pathways to positively regulate lin-3 expression and thereby promote vulval induction. Plays a role in excretory duct development. Plays a role in male tail development. The chain is Protein strawberry notch homolog from Caenorhabditis elegans.